We begin with the raw amino-acid sequence, 253 residues long: Large ribosomal subunit protein mL57 (253 aa).

The transit peptide at 1-28 directs the protein to the mitochondrion; it reads MENSMMFISRSLRRPVTALNCNLQSVRT.

Belongs to the ribonuclease III family. Mitochondrion-specific ribosomal protein mL57 subfamily. As to quaternary structure, component of the mitochondrial large ribosomal subunit (mt-LSU). Mature yeast 74S mitochondrial ribosomes consist of a small (37S) and a large (54S) subunit. The 37S small subunit contains a 15S ribosomal RNA (15S mt-rRNA) and 34 different proteins. The 54S large subunit contains a 21S rRNA (21S mt-rRNA) and 46 different proteins. mL57 forms a heterodimer with mL44 and stabilizes rRNA expansion segments 1/2 at a membrane-facing protuberance close to the point of attachment of the ribosome to the translocon in the membrane.

It localises to the mitochondrion. Functionally, component of the mitochondrial ribosome (mitoribosome), a dedicated translation machinery responsible for the synthesis of mitochondrial genome-encoded proteins, including at least some of the essential transmembrane subunits of the mitochondrial respiratory chain. The mitoribosomes are attached to the mitochondrial inner membrane and translation products are cotranslationally integrated into the membrane. The chain is Large ribosomal subunit protein mL57 (MRPL15) from Saccharomyces cerevisiae (strain ATCC 204508 / S288c) (Baker's yeast).